The sequence spans 587 residues: Laccase abr2 (587 aa).

Positions 1–17 (MWYQSASLLGVAAVAQA) are cleaved as a signal peptide. Plastocyanin-like domains lie at 41–137 (IFVN…VHIR) and 168–350 (LVML…ANDG). N-linked (GlcNAc...) asparagine glycosylation occurs at Asn71. His75, His77, His119, and His121 together coordinate Cu cation. Asn228, Asn383, Asn420, and Asn462 each carry an N-linked (GlcNAc...) asparagine glycan. One can recognise a Plastocyanin-like 3 domain in the interval 397-577 (PPYPAISPAS…ILMDGVDVWP (181 aa)). His487 serves as a coordination point for Cu cation. The N-linked (GlcNAc...) asparagine glycan is linked to Asn504.

This sequence belongs to the multicopper oxidase family.

The protein localises to the cell surface. It participates in pigment biosynthesis; melanin biosynthesis. Its function is as follows. Laccase; part of the gene cluster that mediates the biosynthesis of dihydroxynaphthalene (DHN)-melanin, a bluish-green pigment and a structural component of the conidial wall. The first step of the pathway is the production of the heptaketide naphtopyrone YWA1 by the polyketide synthase alb1 though condensation of acetyl-CoA with malonyl-CoA. The naphtopyrone YWA1 is then converted to the pentaketide 1,3,6,8-tetrahydroxynaphthalene (1,3,6,8-THN) by the heptaketide hydrolyase ayg1 though chain-length shortening. 1,3,6,8-THN is substrate of the hydroxynaphthalene reductase arp2 to yield scytalone. The scytalone dehydratase arp1 then reduces scytalone to 1,3,8-THN. 1,3,8-THN is also substrate of the hydroxynaphthalene reductase arp2 to yield vermelone. Vermelone is further converted by the multicopper oxidase abr1 to 1,8-DHN. Finally the laccase abr2 transforms 1,8-DHN to DHN-melanin. DHN-melanin biosynthesis appears to be initiated in endosomes where early enzymes (abl1, ayg1, arp1 and arp2) localize, with exocytosis leading to melanin deposition on the cell surface where late enzymes (abr1 and abr2) localize. DHN-melanin is an important structural component of the outer cell wall and is required for the presence of conidial surface hydrophobins. DHN-melanin also plays a crucial role in fungal virulence, including a protective role against the host's immune defenses. DHN-melanin also protects conidia against amoeba predation. The protein is Laccase abr2 of Aspergillus fumigatus (strain ATCC MYA-4609 / CBS 101355 / FGSC A1100 / Af293) (Neosartorya fumigata).